Here is a 751-residue protein sequence, read N- to C-terminus: Meiotic sister-chromatid recombination protein 3 (751 aa).

Disordered regions lie at residues 54–88 (GVGM…RTYS), 216–290 (LRAP…KKQM), 314–410 (PALE…EARF), 431–504 (TQEN…RPSF), and 558–610 (KDVP…SPPQ). Over residues 216–228 (LRAPPRVQQQRQL) the composition is skewed to low complexity. Basic and acidic residues-rich tracts occupy residues 345–356 (ERSRPAKREVRK) and 384–393 (ERVHNKEKTL). Residues 431 to 496 (TQENSTRDNG…GCETGNTTPK (66 aa)) are compositionally biased toward polar residues. The span at 596 to 609 (RSSISSSPRRSSPP) shows a compositional bias: low complexity.

It localises to the cell membrane. Its function is as follows. May be involved in the control of meiotic sister-chromatid recombination. The polypeptide is Meiotic sister-chromatid recombination protein 3 (MSC3) (Eremothecium gossypii (strain ATCC 10895 / CBS 109.51 / FGSC 9923 / NRRL Y-1056) (Yeast)).